Consider the following 920-residue polypeptide: DNA ligase (920 aa).

NAD(+)-binding positions include 90-94, 139-140, and Glu173; these read DAAYD and SL. The active-site N6-AMP-lysine intermediate is Lys175. NAD(+)-binding residues include Arg196, Glu235, Lys360, and Lys384. Residues Cys481, Cys484, Cys500, and Cys506 each contribute to the Zn(2+) site. Positions 659 to 691 are disordered; sequence RAQGEAAIESAETQGDTASETTGAPTGAEAPLG. Polar residues predominate over residues 669-682; that stretch reads AETQGDTASETTGA. The region spanning 839–920 is the BRCT domain; the sequence is SLPQTLAGKT…FAQLLATGTI (82 aa).

This sequence belongs to the NAD-dependent DNA ligase family. LigA subfamily. Mg(2+) serves as cofactor. Requires Mn(2+) as cofactor.

It catalyses the reaction NAD(+) + (deoxyribonucleotide)n-3'-hydroxyl + 5'-phospho-(deoxyribonucleotide)m = (deoxyribonucleotide)n+m + AMP + beta-nicotinamide D-nucleotide.. Functionally, DNA ligase that catalyzes the formation of phosphodiester linkages between 5'-phosphoryl and 3'-hydroxyl groups in double-stranded DNA using NAD as a coenzyme and as the energy source for the reaction. It is essential for DNA replication and repair of damaged DNA. In Bifidobacterium longum (strain NCC 2705), this protein is DNA ligase.